The following is a 270-amino-acid chain: 3-methyl-2-oxobutanoate hydroxymethyltransferase (270 aa).

Residues Asp43 and Asp82 each coordinate Mg(2+). 3-methyl-2-oxobutanoate contacts are provided by residues 43–44, Asp82, and Lys110; that span reads DS. Glu112 provides a ligand contact to Mg(2+). Glu179 acts as the Proton acceptor in catalysis.

Belongs to the PanB family. As to quaternary structure, homodecamer; pentamer of dimers. Mg(2+) serves as cofactor.

The protein resides in the cytoplasm. It catalyses the reaction 3-methyl-2-oxobutanoate + (6R)-5,10-methylene-5,6,7,8-tetrahydrofolate + H2O = 2-dehydropantoate + (6S)-5,6,7,8-tetrahydrofolate. Its pathway is cofactor biosynthesis; (R)-pantothenate biosynthesis; (R)-pantoate from 3-methyl-2-oxobutanoate: step 1/2. Functionally, catalyzes the reversible reaction in which hydroxymethyl group from 5,10-methylenetetrahydrofolate is transferred onto alpha-ketoisovalerate to form ketopantoate. This chain is 3-methyl-2-oxobutanoate hydroxymethyltransferase, found in Psychrobacter sp. (strain PRwf-1).